A 282-amino-acid polypeptide reads, in one-letter code: Short-chain dehydrogenase/reductase prx7 (282 aa).

NADP(+) contacts are provided by Asn23, Asn70, Tyr150, Lys154, Val183, and Thr185. Catalysis depends on Tyr150, which acts as the Proton acceptor. Lys154 acts as the Lowers pKa of active site Tyr in catalysis.

The protein belongs to the short-chain dehydrogenases/reductases (SDR) family.

Its pathway is sesquiterpene biosynthesis. Short-chain dehydrogenase/reductase; part of the gene cluster that mediates the biosynthesis of PR-toxin, a bicyclic sesquiterpene belonging to the eremophilane class and acting as a mycotoxin. The first step of the pathway is catalyzed by the aristolochene synthase which performs the cyclization of trans,trans-farnesyl diphosphate (FPP) to the bicyclic sesquiterpene aristolochene. Following the formation of aristolochene, the non-oxygenated aristolochene is converted to the trioxygenated intermediate eremofortin B, via 7-epi-neopetasone. This conversion appears to involve three enzymes, a hydroxysterol oxidase-like enzyme, the quinone-oxidase prx3 that forms the quinone-type-structure in the bicyclic nucleus of aristolochene with the C8-oxo group and the C-3 hydroxyl group, and the P450 monooxygenase prx9 that introduces the epoxide at the double bond between carbons 1 and 2. No monoxy or dioxy-intermediates have been reported to be released to the broth, so these three early oxidative reactions may be coupled together. Eremofortin B is further oxidized by another P450 monooxygenase, that introduces a second epoxide between carbons 7 and 11 prior to acetylation to eremofortin A by the acetyltransferase prx11. The second epoxidation may be performed by a second P450 monooxygenase. After the acetylation step, eremofortin A is converted to eremofortin C and then to PR-toxin. First the conversion of eremofortin A to eremofortin C proceeds by oxidation of the side chain of the molecule at C-12 and is catalyzed by the short-chain oxidoreductase prx1. The cytochrome P450 monooxygenase prx8 also plays a role in this step. The primary alcohol formed at C-12 is finally oxidized by the short-chain alcohol dehydrogenase prx4 that forms PR-toxin. In Penicillium rubens (strain ATCC 28089 / DSM 1075 / NRRL 1951 / Wisconsin 54-1255) (Penicillium chrysogenum), this protein is Short-chain dehydrogenase/reductase prx7.